Here is a 340-residue protein sequence, read N- to C-terminus: Glycerol-3-phosphate dehydrogenase [NAD(P)+] (340 aa).

NADPH contacts are provided by S14, F15, R35, and K109. Sn-glycerol 3-phosphate contacts are provided by K109 and G137. An NADPH-binding site is contributed by A141. Positions 192, 245, 255, 256, and 257 each coordinate sn-glycerol 3-phosphate. K192 serves as the catalytic Proton acceptor. NADPH is bound at residue R256. 2 residues coordinate NADPH: V280 and E282.

It belongs to the NAD-dependent glycerol-3-phosphate dehydrogenase family.

It is found in the cytoplasm. It carries out the reaction sn-glycerol 3-phosphate + NAD(+) = dihydroxyacetone phosphate + NADH + H(+). It catalyses the reaction sn-glycerol 3-phosphate + NADP(+) = dihydroxyacetone phosphate + NADPH + H(+). It participates in membrane lipid metabolism; glycerophospholipid metabolism. Catalyzes the reduction of the glycolytic intermediate dihydroxyacetone phosphate (DHAP) to sn-glycerol 3-phosphate (G3P), the key precursor for phospholipid synthesis. This Teredinibacter turnerae (strain ATCC 39867 / T7901) protein is Glycerol-3-phosphate dehydrogenase [NAD(P)+].